Reading from the N-terminus, the 272-residue chain is tRNA pseudouridine synthase B (272 aa).

Aspartate 38 (nucleophile) is an active-site residue.

It belongs to the pseudouridine synthase TruB family. Type 1 subfamily.

The catalysed reaction is uridine(55) in tRNA = pseudouridine(55) in tRNA. Functionally, responsible for synthesis of pseudouridine from uracil-55 in the psi GC loop of transfer RNAs. In Campylobacter jejuni subsp. jejuni serotype O:2 (strain ATCC 700819 / NCTC 11168), this protein is tRNA pseudouridine synthase B.